The sequence spans 956 residues: MIKKYFDPLRMEKSLYEFWEKNGYFKPQNNKGKPNFCIVMPPPNITGNLHIGHAFQQTIMDILIRYNRMIGKNTFWQVGTDHAGIATQIVVEKKILKEENKTVQQLGKKEFLERIWKWKNTSKNVITSQMRRLGISVDWTHEKFTLDPQISFAVRKVFMTLYDECLIYKRKKLVNWDPVLKTVISDLEVKNRNVIGNMWYIKYYLVKNHSIKISQEYYLVIATTRPETLFGDTAIAVHPNDSRYKKYIGCYALVPIINRIIPIISDEFVDVNKGTGCVKITPAHDFNDYEIAMRHNLSIINVFTRNGKITDVIEEYDISGEKSCIYKQNVPLRFHHLDRFIARKIIVKELIALKLLIKIQKHNLAIPYGERSGSVIEPLLTDQWYLRVEPLAKIAVEAVKSGKIIFIPKKYEKIYYSWMNNIKDWCISRQLLWGHRMPIWYDKKNNIYVGLDEKHIREKYHISDDIFLIQETDVLDTWFSSSLWMFSSLGWPNNKDLFKNFYSTDVVVSGFDIIFFWIARMIMLSMHLIKDHNGNGRVPFKKVYITGLICDEHGKKMSKSKGNVVDPLDMIDGISLDALIQKRIKSTVFSTHSKKIITQIQSLYPNGINSSGVDALRFTCAALSTPTRYIKWNINRLYGYRNFCNKLWNASRFILMNLTHEVEPVKLILIKPMSLSDRWIVAEFHNLVKRYRTALDNYRFDIAANVLYEFVWNKFCDFYIELVKSFINSCSMLELKSTRCTLVYILDSVLRLAHPIIPFITEEIWQKLQVFVKKNDKNTIMLQSFPKYDVKLVNKTILEDMDWIKNIFIIIRSFRMDLKISHTTLISISFKNVSSKIHKLIEEHKDYIKKIAYLDNVSIILSNVDSMLFFKSYIVLGAELLIPYSKIFPKEKELKNLNKEISKIQLAINKLQQRLSNEEFIGKAPIHVVKKYKNQLQIYIEHKTQLCHKKLTMLRD.

The 'HIGH' region motif lies at 43–53 (PNITGNLHIGH). Positions 556 to 560 (KMSKS) match the 'KMSKS' region motif. Lys-559 provides a ligand contact to ATP. A coiled-coil region spans residues 889–920 (PKEKELKNLNKEISKIQLAINKLQQRLSNEEF).

It belongs to the class-I aminoacyl-tRNA synthetase family. ValS type 1 subfamily. As to quaternary structure, monomer.

It is found in the cytoplasm. It catalyses the reaction tRNA(Val) + L-valine + ATP = L-valyl-tRNA(Val) + AMP + diphosphate. Functionally, catalyzes the attachment of valine to tRNA(Val). As ValRS can inadvertently accommodate and process structurally similar amino acids such as threonine, to avoid such errors, it has a 'posttransfer' editing activity that hydrolyzes mischarged Thr-tRNA(Val) in a tRNA-dependent manner. The sequence is that of Valine--tRNA ligase from Buchnera aphidicola subsp. Baizongia pistaciae (strain Bp).